We begin with the raw amino-acid sequence, 287 residues long: Eukaryotic translation initiation factor 3 subunit G (287 aa).

Positions 163–207 (EEDLESKEKDTKLGPTVPGSGKYVAPGMRGDRPAVTGGAERRSEE) are disordered. The RRM domain maps to 208-286 (NTCRVTNLPE…LVLKVEWTRF (79 aa)).

This sequence belongs to the eIF-3 subunit G family. Component of the eukaryotic translation initiation factor 3 (eIF-3) complex.

It localises to the cytoplasm. Functionally, RNA-binding component of the eukaryotic translation initiation factor 3 (eIF-3) complex, which is involved in protein synthesis of a specialized repertoire of mRNAs and, together with other initiation factors, stimulates binding of mRNA and methionyl-tRNAi to the 40S ribosome. The eIF-3 complex specifically targets and initiates translation of a subset of mRNAs involved in cell proliferation. This subunit can bind 18S rRNA. The sequence is that of Eukaryotic translation initiation factor 3 subunit G from Brugia malayi (Filarial nematode worm).